The primary structure comprises 325 residues: tRNA dimethylallyltransferase (325 aa).

11–18 (GPTASGKS) is an ATP binding site. 13-18 (TASGKS) provides a ligand contact to substrate. Interaction with substrate tRNA stretches follow at residues 36–39 (DSMQ) and 160–164 (QRLIR).

It belongs to the IPP transferase family. In terms of assembly, monomer. Requires Mg(2+) as cofactor.

It catalyses the reaction adenosine(37) in tRNA + dimethylallyl diphosphate = N(6)-dimethylallyladenosine(37) in tRNA + diphosphate. Catalyzes the transfer of a dimethylallyl group onto the adenine at position 37 in tRNAs that read codons beginning with uridine, leading to the formation of N6-(dimethylallyl)adenosine (i(6)A). This is tRNA dimethylallyltransferase from Rickettsia canadensis (strain McKiel).